We begin with the raw amino-acid sequence, 199 residues long: Inactive glutathione S-transferase D3 (199 aa).

The 64-residue stretch at 1–64 (MVGKALGLEF…YLVEKYGKDD (64 aa)) folds into the GST N-terminal domain. Residues 34 to 36 (HSI) and 48 to 50 (ESR) each bind glutathione. Residues 70 to 199 (DIQKQAVINQ…RIEEKQNAAK (130 aa)) form the GST C-terminal domain.

This sequence belongs to the GST superfamily. Delta family. Homodimer.

In terms of biological role, has no glutathione S-transferase activity. This Drosophila melanogaster (Fruit fly) protein is Inactive glutathione S-transferase D3.